The sequence spans 180 residues: Large ribosomal subunit protein uL5 (180 aa).

This sequence belongs to the universal ribosomal protein uL5 family. Part of the 50S ribosomal subunit; part of the 5S rRNA/L5/L18/L25 subcomplex. Contacts the 5S rRNA and the P site tRNA. Forms a bridge to the 30S subunit in the 70S ribosome.

Functionally, this is one of the proteins that bind and probably mediate the attachment of the 5S RNA into the large ribosomal subunit, where it forms part of the central protuberance. In the 70S ribosome it contacts protein S13 of the 30S subunit (bridge B1b), connecting the 2 subunits; this bridge is implicated in subunit movement. Contacts the P site tRNA; the 5S rRNA and some of its associated proteins might help stabilize positioning of ribosome-bound tRNAs. This is Large ribosomal subunit protein uL5 from Leuconostoc citreum (strain KM20).